The following is a 1461-amino-acid chain: A disintegrin and metalloproteinase with thrombospondin motifs adt-1 (1461 aa).

The signal sequence occupies residues 1–21 (MPPFYIVITFLLSTVFRISQS). The propeptide occupies 22-163 (VHHHLNEEEL…HLQKERHLVY (142 aa)). A glycan (N-linked (GlcNAc...) asparagine) is linked at Asn-69. A Cysteine switch motif is present at residues 190 to 197 (SFCDTSEQ). Asn-212 carries N-linked (GlcNAc...) asparagine glycosylation. The region spanning 233–435 (ITLEIGLFLD…CSVREFNAFL (203 aa)) is the Peptidase M12B domain. His-388 lines the Zn(2+) pocket. Glu-389 is an active-site residue. 2 residues coordinate Zn(2+): His-392 and His-398. A disulfide bridge links Cys-405 with Cys-410. The region spanning 464–546 (RLPGQRFTAD…TFGLTPVPID (83 aa)) is the Disintegrin domain. TSP type-1 domains are found at residues 708–759 (HQWE…RDCE), 761–802 (FGEW…RPCD), 804–852 (EGCW…QKCI), 853–898 (SQSW…QQCP), 903–952 (LSVW…GPCE), 955–1000 (YLTW…IACL), 1035–1083 (SIHS…NSCL), 1087–1133 (IWSD…PSCS), 1148–1200 (APRW…GSCS), 1203–1260 (AGGW…NVCS), 1265–1321 (DGGW…ARCH), 1324–1378 (DGGW…PACD), and 1382–1435 (DGEW…RQSP). Cystine bridges form between Cys-719-Cys-751, Cys-723-Cys-758, and Cys-735-Cys-741. Disulfide bonds link Cys-816-Cys-846, Cys-820-Cys-851, Cys-831-Cys-836, Cys-862-Cys-892, Cys-866-Cys-897, and Cys-877-Cys-882. Intrachain disulfides connect Cys-1047–Cys-1077, Cys-1051–Cys-1082, and Cys-1062–Cys-1067. Cystine bridges form between Cys-1160-Cys-1194, Cys-1162-Cys-1199, Cys-1173-Cys-1184, Cys-1215-Cys-1253, Cys-1219-Cys-1259, Cys-1231-Cys-1243, Cys-1277-Cys-1314, Cys-1281-Cys-1320, Cys-1292-Cys-1304, Cys-1336-Cys-1372, Cys-1340-Cys-1377, and Cys-1351-Cys-1362.

Zn(2+) is required as a cofactor. In terms of tissue distribution, in hermaphrodites, expressed in the vulva, head ganglia, ventral nerve cord and amphid neurons. Expressed in the rays of the male tail.

It localises to the secreted. Plays a role in ray morphogenesis in the male tail, probably by remodeling the extracellular matrix (ECM) in the cuticle. This Caenorhabditis elegans protein is A disintegrin and metalloproteinase with thrombospondin motifs adt-1.